Here is a 528-residue protein sequence, read N- to C-terminus: Transcription factor cghF (528 aa).

The tract at residues 232-283 (TPPNHATSSTPTSTRTPPTYHPHGPRPKSPLSSTPSPRTESTKSAAPSRDLA) is disordered. A compositionally biased stretch (low complexity) spans 238–249 (TSSTPTSTRTPP). Polar residues predominate over residues 261-276 (PLSSTPSPRTESTKSA).

It is found in the nucleus. Its function is as follows. Transcription factor that regulates the expression of the gene cluster that mediates the biosynthesis of the tetramic acid Sch210972, a potential anti-HIV fungal natural product that contains a decalin core. The chain is Transcription factor cghF from Chaetomium globosum (strain ATCC 6205 / CBS 148.51 / DSM 1962 / NBRC 6347 / NRRL 1970) (Soil fungus).